The primary structure comprises 119 residues: SGSCEVKTCWKAMPPFRKVGNVLKEKFDGATEVEQRKTGSTKVLVPKNSQFKPHTDEDLVYLDSSPDFCDHDLKNGVLGTSGRHCNKTSKAIDGCELMCCGRGFHTDEVEVVERCSCKF.

S1 carries O-palmitoleoyl serine; by PORCN lipidation. 2 cysteine pairs are disulfide-bonded: C69–C100 and C85–C95. N-linked (GlcNAc...) asparagine glycosylation is present at N86.

Belongs to the Wnt family. In terms of processing, palmitoleoylation is required for efficient binding to frizzled receptors. Depalmitoleoylation leads to Wnt signaling pathway inhibition.

Its subcellular location is the secreted. It localises to the extracellular space. It is found in the extracellular matrix. Functionally, ligand for members of the frizzled family of seven transmembrane receptors. Plays an important role in embryonic development. The polypeptide is Protein Wnt-4 (WNT-4) (Sceloporus occidentalis (Western fence lizard)).